Consider the following 250-residue polypeptide: MSLATNNAESKFPSLQRLPNHVAIIMDGNRRWYKKHREECGHTHTSGHYYGAKVLPNILNAVLDLGIKVLTLYTFSTENFGRPKEEIQEIFNIFYTQLDKQLPYLMENEICLRCIGDLSKLPKGIQTKINHVSRMTASFSRLELVLAVNYGGKDELVRAFKKLHVDILNKKISSDDLSESLISSYLDTSGLTDPDLLIRTGGEMRVSNFLLWQIAYTELYITDTLWPDFTPQDLFEAINVYQQRSRRGGK.

Aspartate 27 is an active-site residue. Aspartate 27 serves as a coordination point for Mg(2+). Substrate-binding positions include 28–31, tryptophan 32, histidine 48, and 76–78; these read GNRR and STE. Catalysis depends on asparagine 79, which acts as the Proton acceptor. Residues phenylalanine 80, arginine 82, arginine 199, and 205 to 207 each bind substrate; that span reads RVS. Glutamate 218 lines the Mg(2+) pocket.

The protein belongs to the UPP synthase family. In terms of assembly, homodimer. The cofactor is Mg(2+).

In terms of biological role, catalyzes the condensation of isopentenyl diphosphate (IPP) with allylic pyrophosphates generating different type of terpenoids. The sequence is that of Isoprenyl transferase from Chlamydia pneumoniae (Chlamydophila pneumoniae).